The primary structure comprises 122 residues: MRHRNTGRYLGRNSSHRDSMLKNMIISLIRYEIIHTTLQKAKELRKILEPLITISKINSISNRRNIYSKIRNNEIIHKLFNDIGPRFLKKNGGYLSILKSGYRKGDNAYMAYIKFTNTKKNI.

It belongs to the bacterial ribosomal protein bL17 family. As to quaternary structure, part of the 50S ribosomal subunit. Contacts protein L32.

This is Large ribosomal subunit protein bL17 from Wigglesworthia glossinidia brevipalpis.